Here is a 206-residue protein sequence, read N- to C-terminus: Ras-related protein Rab7 (206 aa).

GTP contacts are provided by residues 15–22 (GDSGVGKT), 63–67 (DTAGQ), and 125–128 (NKID). S-geranylgeranyl cysteine attachment occurs at residues Cys204 and Cys206. A Cysteine methyl ester modification is found at Cys206.

The protein belongs to the small GTPase superfamily. Rab family.

It localises to the cell membrane. Functionally, protein transport. Probably involved in vesicular traffic. The protein is Ras-related protein Rab7 of Pisum sativum (Garden pea).